Reading from the N-terminus, the 2567-residue chain is Highly reducing polyketide synthase sor1 (2567 aa).

Positions 14-436 (SEPIAIIGMS…GANAHIILED (423 aa)) constitute a Ketosynthase family 3 (KS3) domain. Active-site for beta-ketoacyl synthase activity residues include cysteine 187, histidine 322, and histidine 359. The tract at residues 550–841 (VFTGQGAQWW…VVEVGPHTAL (292 aa)) is malonyl-CoA:ACP transacylase (MAT) domain. Residues 939–1079 (HHLLGSLVEG…GLISIEFEAS (141 aa)) are N-terminal hotdog fold. The tract at residues 939-1249 (HHLLGSLVEG…GFSYQSLGRS (311 aa)) is dehydratase (DH) domain. A PKS/mFAS DH domain is found at 939–1252 (HHLLGSLVEG…YQSLGRSVSL (314 aa)). Histidine 971 functions as the Proton acceptor; for dehydratase activity in the catalytic mechanism. Residues 1095-1252 (YKRQIPPAQL…YQSLGRSVSL (158 aa)) are C-terminal hotdog fold. Residue aspartate 1161 is the Proton donor; for dehydratase activity of the active site. The segment at 1426-1534 (LEIGASTGGI…RSLLKPGGTL (109 aa)) is methyltransferase (CMet) domain. An enoyl reductase (ER) domain region spans residues 1852-2163 (FLPELLVFGD…TEEETGKRVL (312 aa)). Residues 2187-2369 (ASYLIVGGNG…AVSIDLSLVD (183 aa)) are ketoreductase (KR) domain. Positions 2481–2558 (EAISVVGSAV…QLVANVVDRS (78 aa)) constitute a Carrier domain. Position 2518 is an O-(pantetheine 4'-phosphoryl)serine (serine 2518).

Its pathway is secondary metabolite biosynthesis. Highly reducing polyketide synthase; part of the SOR gene cluster that mediates the biosynthesis of sorbicillinoids, a diverse group of yellow secondary metabolites that restrict growth of competing pathogenic fungi but not of bacteria. Sorbicillinoids biosynthesis requires the action of two PKSs. The SOR cluster is required for the production of trichodimerol and dihydrotrichotetronin, with sor2 being sufficient for production of trichodimerol, but not dihydrotrichotetronin in the light. Sor1 iteratively combines three acetyl units and the growing chain is modified by the ketoacyl reductase subunit, and optional by the enoyl reductase subunit in the second cycle. The polyketide is then handed over to the PKS sor2, which adds three more acetyl units, and two methyl groups. Sor2 releases an aldehyde, which undergoes spontaneous cyclization resulting in the formation of sorbicillin or 2',3'-dihydrosorbicillin. The monooxygenase sor5 oxidizes sorbicillin and 2',3'-dihydrosorbicillin to 2',3'-dihydrosorbicillinol and sorbicillinol, respectively. The oxidoreductase sor8 further converts sorbicillinol into oxosorbicillinol. Sorbicillinol is the building block for the other sorbicillinoids such as disorbicillinol, bisvertinolon, dihydrobisvertinolone, and dihydrotrichotetronine. This is Highly reducing polyketide synthase sor1 from Hypocrea jecorina (strain QM6a) (Trichoderma reesei).